A 224-amino-acid chain; its full sequence is UPF0758 protein Mmwyl1_0624 (224 aa).

The MPN domain maps to 102 to 224 (VFASAEHVRT…PVSLAERGLV (123 aa)). Zn(2+)-binding residues include H173, H175, and D186. Positions 173–186 (HNHPSGIAEPSQAD) match the JAMM motif motif.

Belongs to the UPF0758 family.

This is UPF0758 protein Mmwyl1_0624 from Marinomonas sp. (strain MWYL1).